Reading from the N-terminus, the 562-residue chain is Sensor histidine kinase MtrB (562 aa).

2 helical membrane-spanning segments follow: residues 42 to 62 and 213 to 233; these read VVAL…FVLT and GTMA…ALLV. The HAMP domain occupies 235 to 287; that stretch reads RQVVVPVRSASRIAERFAEGHLSERMPVRGEDDMARLAVSFNDMAESLSRQIT. Residues 302 to 519 enclose the Histidine kinase domain; that stretch reads DVSHELRTPL…CFRLTLPLVR (218 aa). The tract at residues 526–562 is disordered; the sequence is SPLPMKPILQPSPQASTAGQQHGTQRQRLREHAERSR. Positions 536–551 are enriched in polar residues; the sequence is PSPQASTAGQQHGTQR. Residues 553 to 562 show a composition bias toward basic and acidic residues; it reads RLREHAERSR.

It localises to the cell membrane. It carries out the reaction ATP + protein L-histidine = ADP + protein N-phospho-L-histidine.. Its function is as follows. Member of the two-component regulatory system MtrA/MtrB. Seems to function as a membrane-associated protein kinase that phosphorylates MtrA in response to environmental signals. The sequence is that of Sensor histidine kinase MtrB (mtrB) from Mycobacterium leprae (strain TN).